A 449-amino-acid chain; its full sequence is Exodeoxyribonuclease 7 large subunit (449 aa).

This sequence belongs to the XseA family. In terms of assembly, heterooligomer composed of large and small subunits.

It localises to the cytoplasm. The catalysed reaction is Exonucleolytic cleavage in either 5'- to 3'- or 3'- to 5'-direction to yield nucleoside 5'-phosphates.. Its function is as follows. Bidirectionally degrades single-stranded DNA into large acid-insoluble oligonucleotides, which are then degraded further into small acid-soluble oligonucleotides. In Salmonella typhimurium (strain LT2 / SGSC1412 / ATCC 700720), this protein is Exodeoxyribonuclease 7 large subunit.